A 340-amino-acid chain; its full sequence is Dihydroorotase (340 aa).

H14 and H16 together coordinate Zn(2+). Substrate contacts are provided by residues 16–18 and N42; that span reads HLR. 3 residues coordinate Zn(2+): K100, H137, and H175. K100 is modified (N6-carboxylysine). Substrate is bound at residue H137. L220 lines the substrate pocket. D248 contacts Zn(2+). The active site involves D248. Substrate-binding residues include H252 and A264.

It belongs to the metallo-dependent hydrolases superfamily. DHOase family. Class II DHOase subfamily. As to quaternary structure, homodimer. The cofactor is Zn(2+).

It catalyses the reaction (S)-dihydroorotate + H2O = N-carbamoyl-L-aspartate + H(+). It functions in the pathway pyrimidine metabolism; UMP biosynthesis via de novo pathway; (S)-dihydroorotate from bicarbonate: step 3/3. In terms of biological role, catalyzes the reversible cyclization of carbamoyl aspartate to dihydroorotate. In Sphingopyxis alaskensis (strain DSM 13593 / LMG 18877 / RB2256) (Sphingomonas alaskensis), this protein is Dihydroorotase.